A 155-amino-acid polypeptide reads, in one-letter code: uncharacterized protein (155 aa).

The N-terminal stretch at 1 to 21 (MFFIVAAGFVIAALIAAIGMA) is a signal peptide. A disordered region spans residues 35–155 (GQTKPATTRP…PVYRPPEEMV (121 aa)). A compositionally biased stretch (polar residues) spans 118-128 (ATASNTPQNEA).

This is an uncharacterized protein from Schizosaccharomyces pombe (strain 972 / ATCC 24843) (Fission yeast).